A 344-amino-acid polypeptide reads, in one-letter code: L-threonine 3-dehydrogenase (344 aa).

A Zn(2+)-binding site is contributed by C42. Active-site charge relay system residues include T44 and H47. Residues H67, E68, C97, C100, C103, and C111 each coordinate Zn(2+). NAD(+)-binding positions include I179, D199, R204, 266–268, and 290–291; these read LGI and IY.

The protein belongs to the zinc-containing alcohol dehydrogenase family. As to quaternary structure, homotetramer. It depends on Zn(2+) as a cofactor.

It localises to the cytoplasm. It catalyses the reaction L-threonine + NAD(+) = (2S)-2-amino-3-oxobutanoate + NADH + H(+). Its pathway is amino-acid degradation; L-threonine degradation via oxydo-reductase pathway; glycine from L-threonine: step 1/2. In terms of biological role, catalyzes the NAD(+)-dependent oxidation of L-threonine to 2-amino-3-ketobutyrate. This is L-threonine 3-dehydrogenase from Sinorhizobium medicae (strain WSM419) (Ensifer medicae).